The primary structure comprises 200 residues: ATP-dependent Clp protease proteolytic subunit 2 (200 aa).

Serine 100 functions as the Nucleophile in the catalytic mechanism.

Belongs to the peptidase S14 family. As to quaternary structure, fourteen ClpP subunits assemble into 2 heptameric rings which stack back to back to give a disk-like structure with a central cavity, resembling the structure of eukaryotic proteasomes.

The protein localises to the cytoplasm. The catalysed reaction is Hydrolysis of proteins to small peptides in the presence of ATP and magnesium. alpha-casein is the usual test substrate. In the absence of ATP, only oligopeptides shorter than five residues are hydrolyzed (such as succinyl-Leu-Tyr-|-NHMec, and Leu-Tyr-Leu-|-Tyr-Trp, in which cleavage of the -Tyr-|-Leu- and -Tyr-|-Trp bonds also occurs).. In terms of biological role, cleaves peptides in various proteins in a process that requires ATP hydrolysis. Has a chymotrypsin-like activity. Plays a major role in the degradation of misfolded proteins. This is ATP-dependent Clp protease proteolytic subunit 2 from Streptomyces avermitilis (strain ATCC 31267 / DSM 46492 / JCM 5070 / NBRC 14893 / NCIMB 12804 / NRRL 8165 / MA-4680).